A 103-amino-acid chain; its full sequence is Pyrimidine/purine nucleoside phosphorylase (103 aa).

The protein belongs to the nucleoside phosphorylase PpnP family.

It carries out the reaction a purine D-ribonucleoside + phosphate = a purine nucleobase + alpha-D-ribose 1-phosphate. It catalyses the reaction adenosine + phosphate = alpha-D-ribose 1-phosphate + adenine. The enzyme catalyses cytidine + phosphate = cytosine + alpha-D-ribose 1-phosphate. The catalysed reaction is guanosine + phosphate = alpha-D-ribose 1-phosphate + guanine. It carries out the reaction inosine + phosphate = alpha-D-ribose 1-phosphate + hypoxanthine. It catalyses the reaction thymidine + phosphate = 2-deoxy-alpha-D-ribose 1-phosphate + thymine. The enzyme catalyses uridine + phosphate = alpha-D-ribose 1-phosphate + uracil. The catalysed reaction is xanthosine + phosphate = alpha-D-ribose 1-phosphate + xanthine. Its function is as follows. Catalyzes the phosphorolysis of diverse nucleosides, yielding D-ribose 1-phosphate and the respective free bases. Can use uridine, adenosine, guanosine, cytidine, thymidine, inosine and xanthosine as substrates. Also catalyzes the reverse reactions. The chain is Pyrimidine/purine nucleoside phosphorylase from Shewanella baltica (strain OS223).